A 144-amino-acid polypeptide reads, in one-letter code: D-aminoacyl-tRNA deacylase (144 aa).

A Gly-cisPro motif, important for rejection of L-amino acids motif is present at residues 136-137 (GP).

The protein belongs to the DTD family. Homodimer.

The protein localises to the cytoplasm. It catalyses the reaction glycyl-tRNA(Ala) + H2O = tRNA(Ala) + glycine + H(+). The catalysed reaction is a D-aminoacyl-tRNA + H2O = a tRNA + a D-alpha-amino acid + H(+). An aminoacyl-tRNA editing enzyme that deacylates mischarged D-aminoacyl-tRNAs. Also deacylates mischarged glycyl-tRNA(Ala), protecting cells against glycine mischarging by AlaRS. Acts via tRNA-based rather than protein-based catalysis; rejects L-amino acids rather than detecting D-amino acids in the active site. By recycling D-aminoacyl-tRNA to D-amino acids and free tRNA molecules, this enzyme counteracts the toxicity associated with the formation of D-aminoacyl-tRNA entities in vivo and helps enforce protein L-homochirality. The protein is D-aminoacyl-tRNA deacylase of Pasteurella multocida (strain Pm70).